Reading from the N-terminus, the 396-residue chain is L-lactate dehydrogenase (396 aa).

The region spanning 1–380 is the FMN hydroxy acid dehydrogenase domain; it reads MIISAASDYR…SGDSLVQELG (380 aa). Residue tyrosine 24 participates in substrate binding. FMN is bound by residues serine 106 and glutamine 127. Residue tyrosine 129 coordinates substrate. Threonine 155 is a binding site for FMN. Arginine 164 contacts substrate. Lysine 251 contributes to the FMN binding site. The Proton acceptor role is filled by histidine 275. Arginine 278 is a substrate binding site. 306–330 is a binding site for FMN; that stretch reads DSGIRNGLDVVRMIALGADTVLLGR.

It belongs to the FMN-dependent alpha-hydroxy acid dehydrogenase family. The cofactor is FMN.

It localises to the cell inner membrane. The enzyme catalyses (S)-lactate + A = pyruvate + AH2. Functionally, catalyzes the conversion of L-lactate to pyruvate. Is coupled to the respiratory chain. This chain is L-lactate dehydrogenase, found in Salmonella choleraesuis (strain SC-B67).